Here is a 173-residue protein sequence, read N- to C-terminus: MAAAFASRLTRGGRSLLGGLNNGGSMNSSNGMMNESILSQQQQRRTFIQMGTVLKVVDNSGAKKVMCIQALKGKKGARLGDTIVASVKEAMPNGKVKKGAVVYGVVVRAAMQRGRVDGSEVRFDDNAVVLVDSKDKNTKTDRQPIGTRVFGPVPHELRKKKHLKILALAQHVA.

A mitochondrion-targeting transit peptide spans 1–61 (MAAAFASRLT…TVLKVVDNSG (61 aa)).

The protein belongs to the universal ribosomal protein uL14 family. Part of the mitochondrial 50S ribosomal subunit. Mostly expressed in leaves and inflorescences, including floral organs and meristems, and, to a lower extent, in pistils.

The protein resides in the mitochondrion. Binds to 23S rRNA in mitochondrion. The polypeptide is Large ribosomal subunit protein uL14mz (HLP) (Arabidopsis thaliana (Mouse-ear cress)).